Reading from the N-terminus, the 243-residue chain is Terpene cyclase atmB (243 aa).

7 consecutive transmembrane segments (helical) span residues Ile19–Val39, Tyr48–Ile68, Gly78–Gly98, Leu112–Ala132, Ile134–Gly154, Ser169–Leu189, and Leu205–Tyr225.

The protein belongs to the paxB family.

It localises to the membrane. Functionally, terpene cyclase; part of the ATM2 gene cluster that mediates the biosynthesis of aflatrem, a tremorgenic mycotoxin with acute neurotoxic effects. Synthesis of geranylgeranyl diphosphate (GGPP) by AtmG (a GGPP synthase) precedes condensation of GGPP with indole 3-glycerol phosphate, followed by epoxidation and cyclization by AtmM (a FAD-dependent monooxygenase) and AtmC (a prenyltransferase) to produce paspaline. AtmB is also essential for paspaline production, but its exact role has not been identified yet. AtmP, a cytochrome P450 monooxygenase, subsequently converts paspaline to 13-desoxypaxilline via PC-M6 by removal of the C-30 methyl group and oxidation at C-10. AtmQ, a cytochrome P450 monooxygenase, then catalyzes the oxidation of 13-desoxypaxilline, first at C-7 to produce paspalicine and then at C-13 to form paspalinine. Finally, AtmD prenylates paspalinine to form aflatrem. This Aspergillus flavus protein is Terpene cyclase atmB.